Reading from the N-terminus, the 214-residue chain is ATP phosphoribosyltransferase (214 aa).

Belongs to the ATP phosphoribosyltransferase family. Short subfamily. Heteromultimer composed of HisG and HisZ subunits.

The protein resides in the cytoplasm. It carries out the reaction 1-(5-phospho-beta-D-ribosyl)-ATP + diphosphate = 5-phospho-alpha-D-ribose 1-diphosphate + ATP. It participates in amino-acid biosynthesis; L-histidine biosynthesis; L-histidine from 5-phospho-alpha-D-ribose 1-diphosphate: step 1/9. Functionally, catalyzes the condensation of ATP and 5-phosphoribose 1-diphosphate to form N'-(5'-phosphoribosyl)-ATP (PR-ATP). Has a crucial role in the pathway because the rate of histidine biosynthesis seems to be controlled primarily by regulation of HisG enzymatic activity. The sequence is that of ATP phosphoribosyltransferase from Marinomonas sp. (strain MWYL1).